The sequence spans 451 residues: UDP-N-acetylmuramoylalanine--D-glutamate ligase (451 aa).

Position 120 to 126 (120 to 126 (GSNGKTT)) interacts with ATP.

Belongs to the MurCDEF family.

The protein resides in the cytoplasm. It carries out the reaction UDP-N-acetyl-alpha-D-muramoyl-L-alanine + D-glutamate + ATP = UDP-N-acetyl-alpha-D-muramoyl-L-alanyl-D-glutamate + ADP + phosphate + H(+). It participates in cell wall biogenesis; peptidoglycan biosynthesis. Its function is as follows. Cell wall formation. Catalyzes the addition of glutamate to the nucleotide precursor UDP-N-acetylmuramoyl-L-alanine (UMA). The chain is UDP-N-acetylmuramoylalanine--D-glutamate ligase (murD) from Bacillus subtilis (strain 168).